Reading from the N-terminus, the 202-residue chain is Secreted RxLR effector protein 11 (202 aa).

Positions 1–23 (MRLNFTKLFAGAVALAWTTESMA) are cleaved as a signal peptide. The RxLR-dEER motif lies at 49 to 61 (RRLRTINGADEER).

The protein belongs to the RxLR effector family.

It is found in the secreted. Its subcellular location is the host cytoplasm. The protein resides in the host nucleus. Its function is as follows. Effector that acts as a broad suppressor of cell death to interrupt plant immunity. Inhibits cell death induced by cell death-inducing proteins, including the PAMP elicitor INF1 from P.infestans. This is Secreted RxLR effector protein 11 from Plasmopara viticola (Downy mildew of grapevine).